A 176-amino-acid polypeptide reads, in one-letter code: ATP-dependent protease subunit HslV (176 aa).

The active site involves Thr-6. Ser-161, Cys-164, and Thr-167 together coordinate Na(+).

Belongs to the peptidase T1B family. HslV subfamily. In terms of assembly, a double ring-shaped homohexamer of HslV is capped on each side by a ring-shaped HslU homohexamer. The assembly of the HslU/HslV complex is dependent on binding of ATP.

The protein localises to the cytoplasm. It catalyses the reaction ATP-dependent cleavage of peptide bonds with broad specificity.. With respect to regulation, allosterically activated by HslU binding. Protease subunit of a proteasome-like degradation complex believed to be a general protein degrading machinery. This chain is ATP-dependent protease subunit HslV, found in Thermosipho africanus (strain TCF52B).